The sequence spans 226 residues: Cobalt transport protein CbiM 2 (226 aa).

Helical transmembrane passes span glycine 6 to tyrosine 26, methionine 43 to valine 63, leucine 75 to phenylalanine 95, threonine 107 to phenylalanine 127, phenylalanine 135 to threonine 155, and valine 181 to methionine 201.

This sequence belongs to the CbiM family. As to quaternary structure, forms an energy-coupling factor (ECF) transporter complex composed of an ATP-binding protein (A component, CbiO), a transmembrane protein (T component, CbiQ) and 2 possible substrate-capture proteins (S components, CbiM and CbiN) of unknown stoichimetry.

Its subcellular location is the cell inner membrane. It participates in cofactor biosynthesis; adenosylcobalamin biosynthesis. Its function is as follows. Part of the energy-coupling factor (ECF) transporter complex CbiMNOQ involved in cobalt import. The protein is Cobalt transport protein CbiM 2 of Pelobacter propionicus (strain DSM 2379 / NBRC 103807 / OttBd1).